A 161-amino-acid polypeptide reads, in one-letter code: MPSFDVVSELDKHELTNAVENAVKELDRRYDLKGKGSFEYKEKDLTVHLTAEADFQLEAMIEILKLALVKRKIDVQCLEVKDSFASGKLMKQDAVLKEGIDKELAKKIVGHIKEAKLKVQAAIQGEQVRVTGKKRDDLQEAIAALRAKEFGMPLQFNNFRD.

Belongs to the YajQ family.

Its function is as follows. Nucleotide-binding protein. The protein is Nucleotide-binding protein Pfl01_4421 of Pseudomonas fluorescens (strain Pf0-1).